The primary structure comprises 1616 residues: DNA (cytosine-5)-methyltransferase 1 (1616 aa).

The tract at residues 1–120 is interaction with DMAP1; sequence MPARTAPARV…NQARSEARRV (120 aa). Residues 1 to 148 form an interaction with DNMT3A region; the sequence is MPARTAPARV…RRSKSDGEAK (148 aa). Interaction with the PRC2/EED-EZH2 complex regions lie at residues 1-336 and 308-606; these read MPAR…TEKK and NPQI…TIRH. One can recognise a DMAP1-binding domain in the interval 16–109; it reads PAISLPDDVR…NREVNGRLEN (94 aa). N6,N6-dimethyllysine is present on Lys-70. The segment at 103–349 is disordered; the sequence is VNGRLENGNQ…AKTVMNSKTH (247 aa). Ser-127 and Ser-133 each carry phosphoserine. Thr-137 carries the post-translational modification Phosphothreonine. Ser-141 carries the post-translational modification Phosphoserine. Lys-142 carries the N6-methyllysine; by SETD7 modification. Ser-143 bears the Phosphoserine; by PKB/AKT1 mark. An interaction with DNMT3B region spans residues 149 to 217; the sequence is PEPSPSPRIT…TSRERVARPL (69 aa). Ser-152 and Ser-154 each carry phosphoserine. Lys-160 bears the N6-acetyllysine mark. The segment at 163 to 174 is interaction with PCNA; the sequence is RQTTITSHFAKG. Thr-166 is subject to Phosphothreonine. Lys-173 and Lys-188 each carry N6-acetyllysine. A Nuclear localization signal motif is present at residues 177 to 205; that stretch reads KRKPQEESERAKSDESIKEEDKDQDEKRR. Basic and acidic residues-rich tracts occupy residues 179–214, 221–267, and 281–306; these read KPQE…ERVA, EPER…REAR, and KDEK…EPEK. Lys-259 carries the N6-acetyllysine; alternate modification. A Glycyl lysine isopeptide (Lys-Gly) (interchain with G-Cter in SUMO2); alternate cross-link involves residue Lys-259. Residues 310-502 are homodimerization; it reads QISDEKDEDE…PEYAPIFGLM (193 aa). Ser-312 bears the Phosphoserine mark. A compositionally biased stretch (basic and acidic residues) spans 321 to 337; it reads EEKRRKTTPKEPTEKKM. Residues 331-550 are DNA replication foci-targeting sequence; the sequence is EPTEKKMARA…NLNRFTEDSL (220 aa). The Zn(2+) site is built by Cys-353 and Cys-356. Residue Lys-366 is modified to N6-acetyllysine. Ser-394 and Ser-398 each carry phosphoserine. Residues Cys-414 and His-418 each contribute to the Zn(2+) site. 2 positions are modified to phosphoserine: Ser-509 and Ser-549. Residues 646 to 692 form a CXXC-type zinc finger; it reads NAFKRRRCGVCEVCQQPECGKCKACKDMVKFGGSGRSKQACQERRCP. The tract at residues 651–697 is required for activity; that stretch reads RRCGVCEVCQQPECGKCKACKDMVKFGGSGRSKQACQERRCPNMAMK. The Zn(2+) site is built by Cys-653, Cys-656, Cys-659, Cys-664, Cys-667, Cys-670, Cys-686, and Cys-691. The tract at residues 693-754 is autoinhibitory linker; that stretch reads NMAMKEADDD…SYYKKVCIDA (62 aa). A compositionally biased stretch (acidic residues) spans 699-709; the sequence is ADDDEEVDDNI. A disordered region spans residues 699 to 729; the sequence is ADDDEEVDDNIPEMPSPKKMHQGKKKKQNKN. Ser-714 is modified (phosphoserine). A compositionally biased stretch (basic residues) spans 716-728; sequence KKMHQGKKKKQNK. Position 732 is a phosphoserine (Ser-732). N6-acetyllysine is present on Lys-749. The BAH 1 domain occupies 755–880; it reads ETLEVGDCVS…QDYARFESPP (126 aa). Ser-878 is modified (phosphoserine). An N6-acetyllysine mark is found at Lys-891, Lys-957, Lys-961, Lys-975, and Lys-1054. The region spanning 972–1100 is the BAH 2 domain; the sequence is HYRKYSDYIK…AKSKSFEDPP (129 aa). A disordered region spans residues 1095 to 1130; it reads SFEDPPNHARSPGNKGKGKGKGKGKPKSQACEPSEP. 5 tandem repeats follow at residues 1109-1110, 1111-1112, 1113-1114, 1115-1116, and 1117-1118. A 6 X 2 AA tandem repeats of K-G region spans residues 1109–1120; it reads KGKGKGKGKGKP. The segment covering 1110–1120 has biased composition (basic residues); it reads GKGKGKGKGKP. N6-acetyllysine occurs at positions 1111, 1113, and 1115. Lys-1117 bears the N6-acetyllysine; by EHMT2 mark. N6-acetyllysine is present on residues Lys-1119 and Lys-1121. One copy of the 6; approximate repeat lies at 1119 to 1120; sequence KP. The interaction with the PRC2/EED-EZH2 complex stretch occupies residues 1121–1616; that stretch reads KSQACEPSEP…KIKEEEAAKD (496 aa). Positions 1139-1599 constitute an SAM-dependent MTase C5-type domain; it reads LRTLDVFSGC…LEIKLCMLAK (461 aa). Residues 1139–1616 are catalytic; that stretch reads LRTLDVFSGC…KIKEEEAAKD (478 aa). S-adenosyl-L-methionine is bound by residues Ser-1146, 1150-1151, 1168-1169, 1190-1191, and Cys-1191; these read GL, EM, and DC. Residue Cys-1226 is part of the active site. Lys-1349 and Lys-1415 each carry N6-acetyllysine. S-adenosyl-L-methionine-binding residues include Asn-1578 and Val-1580. Lys-1609 is covalently cross-linked (Glycyl lysine isopeptide (Lys-Gly) (interchain with G-Cter in SUMO2)).

This sequence belongs to the class I-like SAM-binding methyltransferase superfamily. C5-methyltransferase family. In terms of assembly, homodimer. Forms a stable complex with E2F1, BB1 and HDAC1. Forms a complex with DMAP1 and HDAC2, with direct interaction. Interacts with the PRC2/EED-EZH2 complex. Probably part of a corepressor complex containing ZNF304, TRIM28, SETDB1 and DNMT1. Interacts with UHRF1; promoting its recruitment to hemimethylated DNA. Interacts with USP7, promoting its deubiquitination. Interacts with PCNA. Interacts with MBD2 and MBD3. Interacts with DNMT3A and DNMT3B. Interacts with UBC9. Interacts with CSNK1D. Interacts with HDAC1. Interacts with BAZ2A/TIP5. Interacts with SIRT7. Interacts with ZNF263; recruited to the SIX3 promoter along with other proteins involved in chromatin modification and transcriptional corepression where it contributes to transcriptional repression. Interacts with L3MBTL3 and DCAF5; the interaction requires DNMT1 methylation at Lys-142 and is necessary to target DNMT1 for ubiquitination by the CRL4-DCAF5 E3 ubiquitin ligase complex and proteasomal degradation. Interacts with PHF20L1; the interaction requires DNMT1 methylation at Lys-142 and protects DNMT1 from ubiquitination and proteasomal degradation. Post-translationally, sumoylated; sumoylation increases activity. Acetylation on multiple lysines, mainly by KAT2B/PCAF, regulates cell cycle G(2)/M transition. Deacetylation of Lys-1349 and Lys-1415 by SIRT1 increases methyltransferase activity. In terms of processing, phosphorylation of Ser-154 by CDKs is important for enzymatic activity and protein stability. Phosphorylation of Ser-143 by AKT1 prevents methylation by SETD7 thereby increasing DNMT1 stability. Post-translationally, methylation at Lys-142 by SETD7 is necessary for the regulation of DNMT1 proteasomal degradation. Ubiquitinated by UHRF1; interaction with USP7 counteracts ubiquitination by UHRF1 by promoting deubiquitination and preventing degradation by the proteasome. As to expression, ubiquitous; highly expressed in fetal tissues, heart, kidney, placenta, peripheral blood mononuclear cells, and expressed at lower levels in spleen, lung, brain, small intestine, colon, liver, and skeletal muscle. Isoform 2 is less expressed than isoform 1.

The protein localises to the nucleus. It catalyses the reaction a 2'-deoxycytidine in DNA + S-adenosyl-L-methionine = a 5-methyl-2'-deoxycytidine in DNA + S-adenosyl-L-homocysteine + H(+). Methylates CpG residues. Preferentially methylates hemimethylated DNA. Associates with DNA replication sites in S phase maintaining the methylation pattern in the newly synthesized strand, that is essential for epigenetic inheritance. Associates with chromatin during G2 and M phases to maintain DNA methylation independently of replication. It is responsible for maintaining methylation patterns established in development. DNA methylation is coordinated with methylation of histones. Mediates transcriptional repression by direct binding to HDAC2. In association with DNMT3B and via the recruitment of CTCFL/BORIS, involved in activation of BAG1 gene expression by modulating dimethylation of promoter histone H3 at H3K4 and H3K9. Probably forms a corepressor complex required for activated KRAS-mediated promoter hypermethylation and transcriptional silencing of tumor suppressor genes (TSGs) or other tumor-related genes in colorectal cancer (CRC) cells. Also required to maintain a transcriptionally repressive state of genes in undifferentiated embryonic stem cells (ESCs). Associates at promoter regions of tumor suppressor genes (TSGs) leading to their gene silencing. Promotes tumor growth. The polypeptide is DNA (cytosine-5)-methyltransferase 1 (DNMT1) (Homo sapiens (Human)).